The primary structure comprises 173 residues: Crossover junction endodeoxyribonuclease RuvC (173 aa).

Catalysis depends on residues aspartate 11, glutamate 71, and aspartate 143. 3 residues coordinate Mg(2+): aspartate 11, glutamate 71, and aspartate 143.

It belongs to the RuvC family. As to quaternary structure, homodimer which binds Holliday junction (HJ) DNA. The HJ becomes 2-fold symmetrical on binding to RuvC with unstacked arms; it has a different conformation from HJ DNA in complex with RuvA. In the full resolvosome a probable DNA-RuvA(4)-RuvB(12)-RuvC(2) complex forms which resolves the HJ. It depends on Mg(2+) as a cofactor.

Its subcellular location is the cytoplasm. It carries out the reaction Endonucleolytic cleavage at a junction such as a reciprocal single-stranded crossover between two homologous DNA duplexes (Holliday junction).. In terms of biological role, the RuvA-RuvB-RuvC complex processes Holliday junction (HJ) DNA during genetic recombination and DNA repair. Endonuclease that resolves HJ intermediates. Cleaves cruciform DNA by making single-stranded nicks across the HJ at symmetrical positions within the homologous arms, yielding a 5'-phosphate and a 3'-hydroxyl group; requires a central core of homology in the junction. The consensus cleavage sequence is 5'-(A/T)TT(C/G)-3'. Cleavage occurs on the 3'-side of the TT dinucleotide at the point of strand exchange. HJ branch migration catalyzed by RuvA-RuvB allows RuvC to scan DNA until it finds its consensus sequence, where it cleaves and resolves the cruciform DNA. The sequence is that of Crossover junction endodeoxyribonuclease RuvC from Brucella suis biovar 1 (strain 1330).